The following is a 214-amino-acid chain: Large ribosomal subunit protein uL16-like (214 aa).

This sequence belongs to the universal ribosomal protein uL16 family. As to quaternary structure, component of the 60S large ribosomal subunit (LSU).

Its subcellular location is the cytoplasm. Testis-specific component of the ribosome, which is required for the transition from prophase to metaphase in male meiosis I. Compensates for the inactivated X-linked RPL10 paralog during spermatogenesis. The ribosome is a large ribonucleoprotein complex responsible for the synthesis of proteins in the cell. The small ribosomal subunit (SSU) binds messenger RNAs (mRNAs) and translates the encoded message by selecting cognate aminoacyl-transfer RNA (tRNA) molecules. The large subunit (LSU) contains the ribosomal catalytic site termed the peptidyl transferase center (PTC), which catalyzes the formation of peptide bonds, thereby polymerizing the amino acids delivered by tRNAs into a polypeptide chain. The nascent polypeptides leave the ribosome through a tunnel in the LSU and interact with protein factors that function in enzymatic processing, targeting, and the membrane insertion of nascent chains at the exit of the ribosomal tunnel. In Macaca fascicularis (Crab-eating macaque), this protein is Large ribosomal subunit protein uL16-like (RPL10L).